Consider the following 296-residue polypeptide: Phosphoribosylaminoimidazole-succinocarboxamide synthase (296 aa).

The protein belongs to the SAICAR synthetase family.

It carries out the reaction 5-amino-1-(5-phospho-D-ribosyl)imidazole-4-carboxylate + L-aspartate + ATP = (2S)-2-[5-amino-1-(5-phospho-beta-D-ribosyl)imidazole-4-carboxamido]succinate + ADP + phosphate + 2 H(+). Its pathway is purine metabolism; IMP biosynthesis via de novo pathway; 5-amino-1-(5-phospho-D-ribosyl)imidazole-4-carboxamide from 5-amino-1-(5-phospho-D-ribosyl)imidazole-4-carboxylate: step 1/2. This Geotalea uraniireducens (strain Rf4) (Geobacter uraniireducens) protein is Phosphoribosylaminoimidazole-succinocarboxamide synthase.